Consider the following 209-residue polypeptide: Kynurenine formamidase (209 aa).

W18 lines the substrate pocket. The Zn(2+) site is built by H48, H52, and D54. Residue H58 is the Proton donor/acceptor of the active site. Residues H160 and E172 each coordinate Zn(2+).

The protein belongs to the Cyclase 1 superfamily. KynB family. Homodimer. It depends on Zn(2+) as a cofactor.

It carries out the reaction N-formyl-L-kynurenine + H2O = L-kynurenine + formate + H(+). It functions in the pathway amino-acid degradation; L-tryptophan degradation via kynurenine pathway; L-kynurenine from L-tryptophan: step 2/2. Functionally, catalyzes the hydrolysis of N-formyl-L-kynurenine to L-kynurenine, the second step in the kynurenine pathway of tryptophan degradation. The protein is Kynurenine formamidase of Paraburkholderia phymatum (strain DSM 17167 / CIP 108236 / LMG 21445 / STM815) (Burkholderia phymatum).